We begin with the raw amino-acid sequence, 190 residues long: Flavodoxin-like domain-containing protein BilS (190 aa).

Its pathway is porphyrin-containing compound metabolism; protoheme degradation. Together with BilR, catalyzes reduction of mesobilirubin and/or bilirubin to urobilinogen, a key step during heme degradation. BilS is probably involved in electron transfer for the bilirubin reductase BilR. The chain is Flavodoxin-like domain-containing protein BilS from Clostridium symbiosum (strain WAL-14163).